Reading from the N-terminus, the 311-residue chain is Pyrimidine-specific ribonucleoside hydrolase RihA (311 aa).

Histidine 240 is an active-site residue.

Belongs to the IUNH family. RihA subfamily.

In terms of biological role, hydrolyzes with equal efficiency cytidine or uridine to ribose and cytosine or uracil, respectively. This chain is Pyrimidine-specific ribonucleoside hydrolase RihA, found in Escherichia fergusonii (strain ATCC 35469 / DSM 13698 / CCUG 18766 / IAM 14443 / JCM 21226 / LMG 7866 / NBRC 102419 / NCTC 12128 / CDC 0568-73).